A 151-amino-acid chain; its full sequence is Multiprotein-bridging factor 1 (151 aa).

2 disordered regions span residues 1-29 and 78-98; these read MSDW…ARSQ and DPNV…SQKD. The segment at 41 to 119 is essential for TBP-binding; sequence VVSVDKKYGS…VNDYEAARAI (79 aa). One can recognise an HTH cro/C1-type domain in the interval 85 to 139; sequence ISRARTDKKMSQKDLATKINEKPTVVNDYEAARAIPNQQVLSKLERALGVKLRGN. The segment covering 88 to 98 has biased composition (basic and acidic residues); the sequence is ARTDKKMSQKD. The H-T-H motif DNA-binding region spans 96–115; the sequence is QKDLATKINEKPTVVNDYEA. A Phosphoserine modification is found at Ser143.

This sequence belongs to the MBF1 family. As to quaternary structure, interacts with TBP and the transcription factor GCN4. Interacts with RPS3/us3.

Its subcellular location is the cytoplasm. It localises to the nucleus. Transcriptional coactivator that stimulates GCN4-dependent transcriptional activity by bridging the DNA-binding region of GCN4 and TBP (SPT15), thereby recruiting TBP to GCN4-bound promoters. Involved in induction of the ribosome quality control (RQC) pathway; a pathway that degrades nascent peptide chains during problematic translation. Required to prevent stalled ribosomes from frameshifting. The chain is Multiprotein-bridging factor 1 (MBF1) from Saccharomyces cerevisiae (strain ATCC 204508 / S288c) (Baker's yeast).